The primary structure comprises 864 residues: Leucine--tRNA ligase (864 aa).

A 'HIGH' region motif is present at residues 42 to 52 (PYPSGKLHMGH). The short motif at 624 to 628 (KMSKS) is the 'KMSKS' region element. Lysine 627 provides a ligand contact to ATP.

This sequence belongs to the class-I aminoacyl-tRNA synthetase family.

The protein localises to the cytoplasm. It carries out the reaction tRNA(Leu) + L-leucine + ATP = L-leucyl-tRNA(Leu) + AMP + diphosphate. The sequence is that of Leucine--tRNA ligase from Burkholderia vietnamiensis (strain G4 / LMG 22486) (Burkholderia cepacia (strain R1808)).